We begin with the raw amino-acid sequence, 88 residues long: Small ribosomal subunit protein uS15 (88 aa).

It belongs to the universal ribosomal protein uS15 family. Part of the 30S ribosomal subunit. Forms a bridge to the 50S subunit in the 70S ribosome, contacting the 23S rRNA.

Functionally, one of the primary rRNA binding proteins, it binds directly to 16S rRNA where it helps nucleate assembly of the platform of the 30S subunit by binding and bridging several RNA helices of the 16S rRNA. In terms of biological role, forms an intersubunit bridge (bridge B4) with the 23S rRNA of the 50S subunit in the ribosome. The protein is Small ribosomal subunit protein uS15 of Mesoplasma florum (strain ATCC 33453 / NBRC 100688 / NCTC 11704 / L1) (Acholeplasma florum).